The primary structure comprises 387 residues: Cytochrome b (387 aa).

Residues 32 to 52 form a helical membrane-spanning segment; that stretch reads LGSLLGLCLVIQIASGVFLAM. 2 residues coordinate heme b: His82 and His96. 8 helical membrane passes run 85-105, 116-136, 151-171, 179-199, 225-245, 289-309, 324-344, and 350-370; these read GASFFFICMYLHIGKALYYGS, IGVVIFILTMAIAFMGYCLVY, LSAIPFIGNDIVPFIWGGFSV, FFALHFLLPFILAALVCMHLM, FIFKDLITVFVFLLIFSLFVF, LGGVIAMFGAILILLSLPYTD, LAFYLFVFNFILLGNLGQLHV, and QLGQFATAYYFAHYIIVVPVI. 2 residues coordinate heme b: His183 and His197.

The protein belongs to the cytochrome b family. Component of the ubiquinol-cytochrome c oxidoreductase (cytochrome b-c1 complex, complex III, CIII), a multisubunit enzyme composed of 10 subunits. The complex is composed of 3 respiratory subunits cytochrome b (COB), cytochrome c1 (CYT1) and Rieske protein (RIP1), 2 core protein subunits COR1 and QCR2, and 5 low-molecular weight protein subunits QCR6, QCR7, QCR8, QCR9 and QCR10. The complex exists as an obligatory dimer and forms supercomplexes (SCs) in the inner mitochondrial membrane with a monomer or a dimer of cytochrome c oxidase (complex IV, CIV), resulting in 2 different assemblies (supercomplexes III(2)IV and III(2)IV(2)). Heme b is required as a cofactor.

The protein localises to the mitochondrion inner membrane. Component of the ubiquinol-cytochrome c oxidoreductase, a multisubunit transmembrane complex that is part of the mitochondrial electron transport chain which drives oxidative phosphorylation. The complex plays an important role in the uptake of multiple carbon sources present in different host niches. This is Cytochrome b from Candida albicans (strain SC5314 / ATCC MYA-2876) (Yeast).